We begin with the raw amino-acid sequence, 380 residues long: Probable transposase for insertion sequence element IS701 (380 aa).

Involved in the transposition of the insertion sequence. The protein is Probable transposase for insertion sequence element IS701 of Microchaete diplosiphon (Fremyella diplosiphon).